The primary structure comprises 512 residues: Ribonuclease Y (512 aa).

The chain crosses the membrane as a helical span at residues 2–22 (VGMYIIIPIVTFIIGGLLAWL). The KH domain maps to 202 to 262 (SITVFHIESD…VRREIARLAL (61 aa)). Positions 328 to 421 (LLQHARETAN…VQVCDAISGA (94 aa)) constitute an HD domain.

Belongs to the RNase Y family.

It localises to the cell membrane. In terms of biological role, endoribonuclease that initiates mRNA decay. The sequence is that of Ribonuclease Y from Parabacteroides distasonis (strain ATCC 8503 / DSM 20701 / CIP 104284 / JCM 5825 / NCTC 11152).